An 891-amino-acid polypeptide reads, in one-letter code: Valine--tRNA ligase (891 aa).

Residues 43 to 53 (PFTSGTLHLGH) carry the 'HIGH' region motif. A 'KMSKS' region motif is present at residues 536–540 (KMSKS). An ATP-binding site is contributed by Lys-539.

The protein belongs to the class-I aminoacyl-tRNA synthetase family. ValS type 2 subfamily.

It is found in the cytoplasm. It catalyses the reaction tRNA(Val) + L-valine + ATP = L-valyl-tRNA(Val) + AMP + diphosphate. In terms of biological role, catalyzes the attachment of valine to tRNA(Val). As ValRS can inadvertently accommodate and process structurally similar amino acids such as threonine, to avoid such errors, it has a 'posttransfer' editing activity that hydrolyzes mischarged Thr-tRNA(Val) in a tRNA-dependent manner. This is Valine--tRNA ligase from Pyrococcus horikoshii (strain ATCC 700860 / DSM 12428 / JCM 9974 / NBRC 100139 / OT-3).